A 226-amino-acid polypeptide reads, in one-letter code: Leucyl/phenylalanyl-tRNA--protein transferase (226 aa).

Belongs to the L/F-transferase family.

It localises to the cytoplasm. The enzyme catalyses N-terminal L-lysyl-[protein] + L-leucyl-tRNA(Leu) = N-terminal L-leucyl-L-lysyl-[protein] + tRNA(Leu) + H(+). It catalyses the reaction N-terminal L-arginyl-[protein] + L-leucyl-tRNA(Leu) = N-terminal L-leucyl-L-arginyl-[protein] + tRNA(Leu) + H(+). The catalysed reaction is L-phenylalanyl-tRNA(Phe) + an N-terminal L-alpha-aminoacyl-[protein] = an N-terminal L-phenylalanyl-L-alpha-aminoacyl-[protein] + tRNA(Phe). Its function is as follows. Functions in the N-end rule pathway of protein degradation where it conjugates Leu, Phe and, less efficiently, Met from aminoacyl-tRNAs to the N-termini of proteins containing an N-terminal arginine or lysine. In Pseudomonas fluorescens (strain Pf0-1), this protein is Leucyl/phenylalanyl-tRNA--protein transferase.